The chain runs to 471 residues: Heat shock 70 kDa protein 13 (471 aa).

The signal sequence occupies residues 1–22 (MAREMTILGSAVLTLLLAGYLA). A compositionally biased stretch (basic and acidic residues) spans 315–341 (EQDRKEPHSSDTELPKDKLSSADDHRV). The disordered stretch occupies residues 315 to 352 (EQDRKEPHSSDTELPKDKLSSADDHRVNSGFGRGLSDK).

This sequence belongs to the heat shock protein 70 family. Binds UBQLN2. As to expression, constitutively expressed in all tissues.

The protein localises to the microsome. It is found in the endoplasmic reticulum. Has peptide-independent ATPase activity. This chain is Heat shock 70 kDa protein 13 (HSPA13), found in Homo sapiens (Human).